The sequence spans 338 residues: Mycothiol acetyltransferase (338 aa).

2 consecutive N-acetyltransferase domains span residues 29 to 173 (PETY…HQLP) and 181 to 338 (ISLR…NKFQ). Residue Asp-55 participates in 1D-myo-inositol 2-(L-cysteinylamino)-2-deoxy-alpha-D-glucopyranoside binding. Residue 105-107 (LVV) coordinates acetyl-CoA. The 1D-myo-inositol 2-(L-cysteinylamino)-2-deoxy-alpha-D-glucopyranoside site is built by Glu-208, Lys-248, and Glu-261. Residues 265–267 (VGI) and 272–278 (QGKGLGK) contribute to the acetyl-CoA site. Tyr-299 serves as a coordination point for 1D-myo-inositol 2-(L-cysteinylamino)-2-deoxy-alpha-D-glucopyranoside.

The protein belongs to the acetyltransferase family. MshD subfamily. Monomer.

It carries out the reaction 1D-myo-inositol 2-(L-cysteinylamino)-2-deoxy-alpha-D-glucopyranoside + acetyl-CoA = mycothiol + CoA + H(+). Catalyzes the transfer of acetyl from acetyl-CoA to desacetylmycothiol (Cys-GlcN-Ins) to form mycothiol. This is Mycothiol acetyltransferase from Renibacterium salmoninarum (strain ATCC 33209 / DSM 20767 / JCM 11484 / NBRC 15589 / NCIMB 2235).